A 459-amino-acid polypeptide reads, in one-letter code: Chromosomal replication initiator protein DnaA (459 aa).

Residues 1-74 (MQKIETFWYF…DEMAQGHFNE (74 aa)) form a domain I, interacts with DnaA modulators region. The interval 74-122 (EKIHFKLELKDPAEIKTATIKAPEPKSKEDKKPPTDKAHGTTARKTNPS) is domain II. The disordered stretch occupies residues 91-123 (ATIKAPEPKSKEDKKPPTDKAHGTTARKTNPSR). Basic and acidic residues predominate over residues 96–112 (PEPKSKEDKKPPTDKAH). The segment at 123-339 (RLNPAFTFDA…GALKRVLAYS (217 aa)) is domain III, AAA+ region. The ATP site is built by glycine 167, glycine 169, lysine 170, and threonine 171. The segment at 340 to 459 (RFTGHPISLD…YSTLIHILRG (120 aa)) is domain IV, binds dsDNA.

It belongs to the DnaA family. Oligomerizes as a right-handed, spiral filament on DNA at oriC.

It is found in the cytoplasm. Its function is as follows. Plays an essential role in the initiation and regulation of chromosomal replication. ATP-DnaA binds to the origin of replication (oriC) to initiate formation of the DNA replication initiation complex once per cell cycle. Binds the DnaA box (a 9 base pair repeat at the origin) and separates the double-stranded (ds)DNA. Forms a right-handed helical filament on oriC DNA; dsDNA binds to the exterior of the filament while single-stranded (ss)DNA is stabiized in the filament's interior. The ATP-DnaA-oriC complex binds and stabilizes one strand of the AT-rich DNA unwinding element (DUE), permitting loading of DNA polymerase. After initiation quickly degrades to an ADP-DnaA complex that is not apt for DNA replication. Binds acidic phospholipids. The chain is Chromosomal replication initiator protein DnaA from Nitrosomonas eutropha (strain DSM 101675 / C91 / Nm57).